The sequence spans 457 residues: Flavohemoprotein-1 (457 aa).

Residues 2–157 form the Globin domain; sequence ALSEDTIKAV…LADLLIKREE (156 aa). Residue H106 participates in heme b binding. Catalysis depends on charge relay system residues Y116 and E156. A reductase region spans residues 168 to 456; that stretch reads GGWRQTRTFR…FEMFGPFKAS (289 aa). One can recognise an FAD-binding FR-type domain in the interval 171–278; that stretch reads RQTRTFRVEE…APPYGDFFLR (108 aa). FAD contacts are provided by residues Y210 and 227 to 230; that span reads RQYS. Residue 320 to 325 coordinates NADP(+); sequence GIGQTP. An FAD-binding site is contributed by 449–452; the sequence is MFGP.

This sequence belongs to the globin family. Two-domain flavohemoproteins subfamily. It in the C-terminal section; belongs to the flavoprotein pyridine nucleotide cytochrome reductase family. As to quaternary structure, monomer. Requires heme b as cofactor. It depends on FAD as a cofactor.

It carries out the reaction 2 nitric oxide + NADPH + 2 O2 = 2 nitrate + NADP(+) + H(+). The enzyme catalyses 2 nitric oxide + NADH + 2 O2 = 2 nitrate + NAD(+) + H(+). In terms of biological role, flavohemoprotein involved in nitric oxide (NO) detoxification in an aerobic process, termed nitric oxide dioxygenase (NOD) reaction that utilizes O(2) and NAD(P)H to convert NO to nitrate, which protects the protozoan parasite from various noxious nitrogen compounds. Therefore, plays a central role in the inducible response to nitrosative stress. May also be involved in O(2) detoxification. The protein is Flavohemoprotein-1 (hmpA-1) of Giardia intestinalis (strain P15) (Giardia lamblia).